A 252-amino-acid polypeptide reads, in one-letter code: MLAKRIIPCLDVDNGRVVKGVQFLDIRDAGDPVEVARRYNEQGADEITFLDITATHHGRDTTYRTVERMAETVFVPLTVGGGVRKVEDIRALLNAGADKVSINSAAVFNPEFVQEASQHFGAQCIVVAIDAKKTGDNKWEIFTHGGRKPTGIDAIEWAVKMADYGAGELLITSMDADGTKAGYDIALMRAINDRVTIPTIASGGVGNLQHLADGILQGGADAVLAASIFHFGQYTIPEAKQYLAEQGIEMRL.

Catalysis depends on residues D11 and D130.

This sequence belongs to the HisA/HisF family. As to quaternary structure, heterodimer of HisH and HisF.

The protein localises to the cytoplasm. The catalysed reaction is 5-[(5-phospho-1-deoxy-D-ribulos-1-ylimino)methylamino]-1-(5-phospho-beta-D-ribosyl)imidazole-4-carboxamide + L-glutamine = D-erythro-1-(imidazol-4-yl)glycerol 3-phosphate + 5-amino-1-(5-phospho-beta-D-ribosyl)imidazole-4-carboxamide + L-glutamate + H(+). Its pathway is amino-acid biosynthesis; L-histidine biosynthesis; L-histidine from 5-phospho-alpha-D-ribose 1-diphosphate: step 5/9. Functionally, IGPS catalyzes the conversion of PRFAR and glutamine to IGP, AICAR and glutamate. The HisF subunit catalyzes the cyclization activity that produces IGP and AICAR from PRFAR using the ammonia provided by the HisH subunit. The sequence is that of Imidazole glycerol phosphate synthase subunit HisF from Acinetobacter baumannii (strain AB307-0294).